Here is a 140-residue protein sequence, read N- to C-terminus: Nucleoside diphosphate kinase (140 aa).

Residues Lys11, Phe59, Arg87, Thr93, Arg104, and Asn114 each contribute to the ATP site. His117 functions as the Pros-phosphohistidine intermediate in the catalytic mechanism.

Belongs to the NDK family. In terms of assembly, homotetramer. It depends on Mg(2+) as a cofactor.

Its subcellular location is the cytoplasm. The catalysed reaction is a 2'-deoxyribonucleoside 5'-diphosphate + ATP = a 2'-deoxyribonucleoside 5'-triphosphate + ADP. It catalyses the reaction a ribonucleoside 5'-diphosphate + ATP = a ribonucleoside 5'-triphosphate + ADP. In terms of biological role, major role in the synthesis of nucleoside triphosphates other than ATP. The ATP gamma phosphate is transferred to the NDP beta phosphate via a ping-pong mechanism, using a phosphorylated active-site intermediate. This Rhizobium rhizogenes (strain K84 / ATCC BAA-868) (Agrobacterium radiobacter) protein is Nucleoside diphosphate kinase.